The following is a 181-amino-acid chain: MSNTTEKKMPQQQQVERPTALAPADAEIERVFTRFDADGDGRISPSELAAVTRAIAPPPSESAGGREVAAMMNELDTDRDGFVDLGEFAAFHGRGRGDAEHEAELRAAFDVYDVDGDGRITAAELGKVLGRIGEGCSAEECERMIASVDVDGDGCVGFEEFKKMMCRDAAATGGADKAKTE.

Residues 1–24 (MSNTTEKKMPQQQQVERPTALAPA) are disordered. EF-hand domains are found at residues 23 to 58 (PADA…IAPP), 63 to 98 (AGGR…GRGD), 100 to 135 (EHEA…IGEG), and 136 to 171 (CSAE…DAAA). Aspartate 36, aspartate 38, aspartate 40, arginine 42, glutamate 47, aspartate 76, aspartate 78, aspartate 80, glutamate 87, aspartate 113, aspartate 115, aspartate 117, arginine 119, glutamate 124, aspartate 149, aspartate 151, aspartate 153, cysteine 155, and glutamate 160 together coordinate Ca(2+).

Its function is as follows. Potential calcium sensor. The sequence is that of Probable calcium-binding protein CML16 (CML16) from Oryza sativa subsp. japonica (Rice).